A 150-amino-acid chain; its full sequence is Large ribosomal subunit protein bL9 (150 aa).

Belongs to the bacterial ribosomal protein bL9 family.

Functionally, binds to the 23S rRNA. The protein is Large ribosomal subunit protein bL9 of Streptococcus gordonii (strain Challis / ATCC 35105 / BCRC 15272 / CH1 / DL1 / V288).